The chain runs to 337 residues: uncharacterized protein (337 aa).

The next 2 membrane-spanning stretches (helical) occupy residues 4–24 and 26–46; these read FIFF…FSLI and LLLW…LFVL.

It belongs to the plectrovirus ORF2 family.

The protein localises to the host membrane. This is an uncharacterized protein from Spiroplasma virus SpV1-R8A2 B (SpV1).